Here is a 768-residue protein sequence, read N- to C-terminus: UPF0313 protein VV1_2212 (768 aa).

One can recognise a Radical SAM core domain in the interval 363–640; it reads AYDMIKTSVN…LHKALLRYHD (278 aa). [4Fe-4S] cluster is bound by residues Cys377, Cys381, and Cys384. Positions 674–768 are disordered; the sequence is DARTPAQRRK…GGRNQPSRAR (95 aa). Residues 679-689 show a composition bias toward basic residues; that stretch reads AQRRKSGRHGA. Over residues 719–731 the composition is skewed to polar residues; that stretch reads GGQSNSAPSRSGS.

The protein belongs to the UPF0313 family. It depends on [4Fe-4S] cluster as a cofactor.

The sequence is that of UPF0313 protein VV1_2212 from Vibrio vulnificus (strain CMCP6).